Here is a 661-residue protein sequence, read N- to C-terminus: FAST kinase domain-containing protein 3, mitochondrial (661 aa).

One can recognise an RAP domain in the interval Val-592–Arg-650.

Belongs to the FAST kinase family. In terms of tissue distribution, expression detected in spleen, testis, colon, heart, smooth muscle, kidney, brain, lung, liver, brown and white adipose tissue with highest expression in testis and smooth muscle.

It is found in the mitochondrion. Its function is as follows. Required for normal mitochondrial respiration. Increases steady-state levels and half-lives of a subset of mature mitochondrial mRNAs MT-ND2, MT-ND3, MT-CYTB, MT-CO2, and MT-ATP8/6. Promotes MT-CO1 mRNA translation and increases mitochondrial complex IV assembly and activity. This is FAST kinase domain-containing protein 3, mitochondrial (Fastkd3) from Mus musculus (Mouse).